Reading from the N-terminus, the 102-residue chain is Trp operon repressor homolog (102 aa).

Residues 59–82 (QRQISQMLGVGIATITRGSNELKL) mediate DNA binding.

This sequence belongs to the TrpR family. In terms of assembly, homodimer.

The protein localises to the cytoplasm. Its function is as follows. This protein is an aporepressor. When complexed with L-tryptophan it binds the operator region of the trp operon and prevents the initiation of transcription. This Vibrio vulnificus (strain CMCP6) protein is Trp operon repressor homolog.